The primary structure comprises 123 residues: Preprofallaxidin-3 (123 aa).

Residues 1 to 22 form the signal peptide; that stretch reads MASLKKSLFLVLFLGLVSLSIC. Positions 23–46 are excised as a propeptide; it reads EEKKRENEDDAEDENHEEESEEKR. The segment at 26–46 is disordered; the sequence is KRENEDDAEDENHEEESEEKR. The segment covering 30–42 has biased composition (acidic residues); that stretch reads EDDAEDENHEEES. Residue L62 is modified to Leucine amide. Residues 66–70 constitute a propeptide that is removed on maturation; sequence SEEKR. F74 is modified (phenylalanine amide). Positions 78-82 are excised as a propeptide; sequence SEEKR. F88 is modified (phenylalanine amide). A propeptide spanning residues 92–96 is cleaved from the precursor; the sequence is SEEKR. I102 carries the post-translational modification Isoleucine amide. Positions 106–110 are excised as a propeptide; it reads SEEKR. I116 bears the Isoleucine amide mark. Residues 120 to 123 constitute a propeptide that is removed on maturation; that stretch reads KKKK.

This sequence belongs to the frog skin active peptide (FSAP) family. Brevinin subfamily. As to expression, expressed by the skin glands.

It localises to the secreted. Functionally, fallaxidin-1.1 shows no antibacterial activity against Gram-positive or Gram-negative bacteria. Does not inhibit the formation of NO by neuronal nitric oxide synthase. Has no effect on splenocyte proliferation or smooth muscle contraction. Its function is as follows. Fallaxidin-1.2 shows no antibacterial activity against Gram-positive or Gram-negative bacteria. Does not inhibit the formation of NO by neuronal nitric oxide synthase. Has no effect on splenocyte proliferation or smooth muscle contraction. In terms of biological role, fallaxidin-1.3 shows no antibacterial activity against Gram-positive or Gram-negative bacteria. Does not inhibit the formation of NO by neuronal nitric oxide synthase. Has no effect on splenocyte proliferation or smooth muscle contraction. Fallaxidin-3.2 shows antibacterial activity against the Gram-positive bacteria E.faecalis (MIC=100 uM) and L.lactis (MIC=500 uM). No antibacterial activity against the Gram-positive bacteria B.cereus, L.innocua, M.luteus, S.epidermidis, S.uberis and S.aureus, or the Gram-negative bacteria E.cloacae and E.coli. This chain is Preprofallaxidin-3, found in Litoria fallax (Eastern dwarf tree frog).